A 576-amino-acid polypeptide reads, in one-letter code: V-type ATP synthase alpha chain (576 aa).

Residue 238-245 (GPFGAGKT) coordinates ATP.

This sequence belongs to the ATPase alpha/beta chains family.

It catalyses the reaction ATP + H2O + 4 H(+)(in) = ADP + phosphate + 5 H(+)(out). In terms of biological role, produces ATP from ADP in the presence of a proton gradient across the membrane. The V-type alpha chain is a catalytic subunit. The polypeptide is V-type ATP synthase alpha chain (Borrelia turicatae (strain 91E135)).